The sequence spans 234 residues: Thymidylate kinase (234 aa).

21-28 (GGEGTGKS) is an ATP binding site.

It belongs to the thymidylate kinase family.

The catalysed reaction is dTMP + ATP = dTDP + ADP. In terms of biological role, phosphorylation of dTMP to form dTDP in both de novo and salvage pathways of dTTP synthesis. The sequence is that of Thymidylate kinase from Rhizobium meliloti (strain 1021) (Ensifer meliloti).